Reading from the N-terminus, the 486-residue chain is MTDQNLAIVVLAAGQGTRMKSATPKLLHPLGGIPVIAHVLETARALEAAEVVAVVRHERDRLAEVIGVELPEAVIVDQDEVPGTGRAVEQAVAALPADFSGDVLVVNGDVPLLDAGTLRELIAAHRAGGSAATILSAFPAVAAGYGRIVRTSTGRLDRIVEHKDATEAERAIGEINAGIYVFGAAALRDKLAAITTDNAQGEKYITDVIGLLRESGFDVDALPVSDSWLVDGINDRAQLSEAAAKLNALTVRAWQLAGVTVQDPATTWIDVRVRLAPDVTLLPGTQLRGATAVETGATIGPDTTLLDTEVGAGATVKRTDATLAVIGAAATVGPFAYLRPGTVLGADGKIGTFVETKNAVIGAGAKLAHFNYVGDAEVGEKSNLGAGVITANYDGVNKHRTEIGSHVRVATNTVFVAPVRMGDGAYTGAGTVVRKDVPAGSLAVTVAPQRNIEGWVAQRRPGTDAARAAQRNGAAEASNAAEESGE.

Residues 1-236 (MTDQNLAIVV…SWLVDGINDR (236 aa)) are pyrophosphorylase. UDP-N-acetyl-alpha-D-glucosamine contacts are provided by residues 11–14 (LAAG), Lys-25, Gln-78, and 83–84 (GT). Asp-109 is a binding site for Mg(2+). 4 residues coordinate UDP-N-acetyl-alpha-D-glucosamine: Gly-146, Glu-161, Asn-176, and Asn-234. Residue Asn-234 participates in Mg(2+) binding. Residues 237 to 257 (AQLSEAAAKLNALTVRAWQLA) are linker. Positions 258–486 (GVTVQDPATT…ASNAAEESGE (229 aa)) are N-acetyltransferase. 2 residues coordinate UDP-N-acetyl-alpha-D-glucosamine: Arg-339 and Lys-357. The active-site Proton acceptor is His-369. UDP-N-acetyl-alpha-D-glucosamine contacts are provided by Tyr-372 and Asn-383. Residues Ala-386, 392 to 393 (NY), and Ala-429 each bind acetyl-CoA. The disordered stretch occupies residues 459-486 (RRPGTDAARAAQRNGAAEASNAAEESGE). A compositionally biased stretch (low complexity) spans 465–486 (AARAAQRNGAAEASNAAEESGE).

In the N-terminal section; belongs to the N-acetylglucosamine-1-phosphate uridyltransferase family. The protein in the C-terminal section; belongs to the transferase hexapeptide repeat family. In terms of assembly, homotrimer. The cofactor is Mg(2+).

The protein resides in the cytoplasm. The catalysed reaction is alpha-D-glucosamine 1-phosphate + acetyl-CoA = N-acetyl-alpha-D-glucosamine 1-phosphate + CoA + H(+). It carries out the reaction N-acetyl-alpha-D-glucosamine 1-phosphate + UTP + H(+) = UDP-N-acetyl-alpha-D-glucosamine + diphosphate. The protein operates within nucleotide-sugar biosynthesis; UDP-N-acetyl-alpha-D-glucosamine biosynthesis; N-acetyl-alpha-D-glucosamine 1-phosphate from alpha-D-glucosamine 6-phosphate (route II): step 2/2. It participates in nucleotide-sugar biosynthesis; UDP-N-acetyl-alpha-D-glucosamine biosynthesis; UDP-N-acetyl-alpha-D-glucosamine from N-acetyl-alpha-D-glucosamine 1-phosphate: step 1/1. Its pathway is bacterial outer membrane biogenesis; LPS lipid A biosynthesis. Functionally, catalyzes the last two sequential reactions in the de novo biosynthetic pathway for UDP-N-acetylglucosamine (UDP-GlcNAc). The C-terminal domain catalyzes the transfer of acetyl group from acetyl coenzyme A to glucosamine-1-phosphate (GlcN-1-P) to produce N-acetylglucosamine-1-phosphate (GlcNAc-1-P), which is converted into UDP-GlcNAc by the transfer of uridine 5-monophosphate (from uridine 5-triphosphate), a reaction catalyzed by the N-terminal domain. The chain is Bifunctional protein GlmU from Leifsonia xyli subsp. xyli (strain CTCB07).